The primary structure comprises 235 residues: Phosphoglycolate phosphatase (235 aa).

The Nucleophile role is filled by Asp-14. Asp-14, Asp-16, and Asp-177 together coordinate Mg(2+).

It belongs to the HAD-like hydrolase superfamily. CbbY/CbbZ/Gph/YieH family. Mg(2+) serves as cofactor.

The catalysed reaction is 2-phosphoglycolate + H2O = glycolate + phosphate. The protein operates within organic acid metabolism; glycolate biosynthesis; glycolate from 2-phosphoglycolate: step 1/1. Functionally, specifically catalyzes the dephosphorylation of 2-phosphoglycolate. Is involved in the dissimilation of the intracellular 2-phosphoglycolate formed during the DNA repair of 3'-phosphoglycolate ends, a major class of DNA lesions induced by oxidative stress. The polypeptide is Phosphoglycolate phosphatase (Neisseria meningitidis serogroup A / serotype 4A (strain DSM 15465 / Z2491)).